Reading from the N-terminus, the 159-residue chain is NAD(P)H-quinone oxidoreductase subunit J, chloroplastic (159 aa).

Belongs to the complex I 30 kDa subunit family. In terms of assembly, NDH is composed of at least 16 different subunits, 5 of which are encoded in the nucleus. Leaves.

The protein resides in the plastid. Its subcellular location is the chloroplast thylakoid membrane. It carries out the reaction a plastoquinone + NADH + (n+1) H(+)(in) = a plastoquinol + NAD(+) + n H(+)(out). The enzyme catalyses a plastoquinone + NADPH + (n+1) H(+)(in) = a plastoquinol + NADP(+) + n H(+)(out). NDH shuttles electrons from NAD(P)H:plastoquinone, via FMN and iron-sulfur (Fe-S) centers, to quinones in the photosynthetic chain and possibly in a chloroplast respiratory chain. The immediate electron acceptor for the enzyme in this species is believed to be plastoquinone. Couples the redox reaction to proton translocation, and thus conserves the redox energy in a proton gradient. The sequence is that of NAD(P)H-quinone oxidoreductase subunit J, chloroplastic from Zea mays (Maize).